The chain runs to 122 residues: Large ribosomal subunit protein uL14 (122 aa).

It belongs to the universal ribosomal protein uL14 family. Part of the 50S ribosomal subunit. Forms a cluster with proteins L3 and L19. In the 70S ribosome, L14 and L19 interact and together make contacts with the 16S rRNA in bridges B5 and B8.

Binds to 23S rRNA. Forms part of two intersubunit bridges in the 70S ribosome. This Pelodictyon phaeoclathratiforme (strain DSM 5477 / BU-1) protein is Large ribosomal subunit protein uL14.